The following is a 195-amino-acid chain: Granulocyte colony-stimulating factor (195 aa).

Residues 1–21 (MKLMVLQLLLWHSALWTVHEA) form the signal peptide. Intrachain disulfides connect Cys-57-Cys-63 and Cys-85-Cys-95. Residue Thr-154 is glycosylated (O-linked (GalNAc...) threonine).

The protein belongs to the IL-6 superfamily. As to quaternary structure, monomer. O-glycosylated.

Its subcellular location is the secreted. Granulocyte/macrophage colony-stimulating factors are cytokines that act in hematopoiesis by controlling the production, differentiation, and function of 2 related white cell populations of the blood, the granulocytes and the monocytes-macrophages. This CSF induces granulocytes. In Bos taurus (Bovine), this protein is Granulocyte colony-stimulating factor (CSF3).